The chain runs to 314 residues: Elongation factor Ts (314 aa).

Residues 82–85 (TDFV) are involved in Mg(2+) ion dislocation from EF-Tu.

Belongs to the EF-Ts family.

The protein localises to the cytoplasm. Its function is as follows. Associates with the EF-Tu.GDP complex and induces the exchange of GDP to GTP. It remains bound to the aminoacyl-tRNA.EF-Tu.GTP complex up to the GTP hydrolysis stage on the ribosome. In Nostoc punctiforme (strain ATCC 29133 / PCC 73102), this protein is Elongation factor Ts.